The primary structure comprises 945 residues: MSPHPPQPHPPMPPMPPVTAPPGAMTPMPPVPADAQKLHQSTGNDACIKRLQQLNVEDGAKMYMKPTEPGKMGRPVDIQTNVFGIEVTKETTVHRFMVHAKADLTSTKEVTFTKKGKEDFVVQDRRDKCCNIFFLAVEKNPEFFKMKDGNQIVYDGQSTLYTTVNLFSELDANGTKSKVFQINGADTGNDDLKTLPCISLEIYAPRDNSITLSSENLGKRTADQNIEVNNREYTQFLELALNQHCVRETNRFGCFEHGKVYFLNATEEGFDQRDCVDVGDGKQLYPGLKKTIQFIEGPYGRGQNNPSLVIDGMKAAFHKEQTVIQKLFDITGQDPSNGLNNMTREKAAAVIKGLDCYSTYTNRKRHLRIEGIFHESATKTRFELPDGKTCSIAEYYADKYKISLQYPNANLVVCKDRGNNNYFPAELMTVSRNQRVTIPQQTGNQSQKTTKECAVLPDVRQRMIITGKNAVNITLENELLVALGIKVYSEPLMVQARELDGKELVYQRSVMSDMGKWRAPPGWFVKPATVPDLWAAYAVGNPGCRFSIGDVNQLVGMFIDSCKKKGMVIKPPCETGLYSTEKIMTQLEKVAASKCKYVLMITDDAIVHLHKQYKALEQRTMMIVQDMKISKANAVVKDGKRLTLENIINKTNVKLGGLNYTVSDAKKSMTDEQLIIGVGVSAPPAGTKYMMDNKGHLNPQIIGFASNAVANHEFVGDFVLAPSGQDTMASIEDVLQNSIDLFEKNRKALPKRIIIYRSGASEGSHASILAYEIPLARAIIHGYSKEIKLIFIVVTKEHSYRFFRDQLRSGGKATEMNIPPGIVLDNAVTNPACKQFFLNGHTTLQGTAKTPLYTVLADDCKAPMDRLEELTFTLCHHHQIVSLSTSIPTPLYVANEYAKRGRDLWGELTTKGPIEAKESQGERLKELTKEIGYKQTDLNQKRVNA.

Positions 1-20 (MSPHPPQPHPPMPPMPPVTA) are enriched in pro residues. Residues 1-41 (MSPHPPQPHPPMPPMPPVTAPPGAMTPMPPVPADAQKLHQS) form a disordered region. Residues 322 to 432 (TVIQKLFDIT…FPAELMTVSR (111 aa)) enclose the PAZ domain. Positions 636–899 (VKDGKRLTLE…PLYVANEYAK (264 aa)) constitute a Piwi domain.

It belongs to the Argonaute family. WAGO subfamily. Interacts with rde-12. Interacts with znfx-1. Enriched in sperm and oocytes.

It is found in the cytoplasmic granule. Functionally, argonaute protein which is involved in the endogenous small interfering RNA (endo-siRNA) pathway. Interacts with secondary 22G-RNAs, which are RNA-dependent RNA polymerase-derived endo-siRNAs, typically 22 nucleotides in length with a 5'guanosine residue. In the germline, functions in a genome surveillance system to silence transposons and aberrant transcripts. In Caenorhabditis elegans, this protein is Argonaute protein wago-1.